A 226-amino-acid chain; its full sequence is Ribosomal RNA large subunit methyltransferase E (226 aa).

A disordered region spans residues 1–25 (MVKPPAGGNEGGRGKPARLKTAYGR). S-adenosyl-L-methionine contacts are provided by G82, W84, D100, D116, and D140. Residue K180 is the Proton acceptor of the active site.

It belongs to the class I-like SAM-binding methyltransferase superfamily. RNA methyltransferase RlmE family.

Its subcellular location is the cytoplasm. The enzyme catalyses uridine(2552) in 23S rRNA + S-adenosyl-L-methionine = 2'-O-methyluridine(2552) in 23S rRNA + S-adenosyl-L-homocysteine + H(+). Specifically methylates the uridine in position 2552 of 23S rRNA at the 2'-O position of the ribose in the fully assembled 50S ribosomal subunit. In Caulobacter vibrioides (strain ATCC 19089 / CIP 103742 / CB 15) (Caulobacter crescentus), this protein is Ribosomal RNA large subunit methyltransferase E.